Here is a 271-residue protein sequence, read N- to C-terminus: MNSKLSLSTKLSSSGKTQLAEYFAKPPFKVITLPSYDDAWANGLNAMQMSSSPGVLAGDVLEIDISLAKLTALSLNTQAFTRVQAMNEGDSAMQTTHILLAENSRLFYLPHPLVLHKDSVFKQQTHIEMGEQSELIYGEIVAIGRVLNDERFAFRQFSSHLKIYTLQDDGKKRPLVSDCIQWLPSKMNLTALSQMENYSHQGSLTYLNLAKNNAEIKQQVQALQQQSAEEKDLLIGISQLNEYGLMVRVLGCRAEQIQKLFEKIGRLLKSV.

This sequence belongs to the UreD family. As to quaternary structure, ureD, UreF and UreG form a complex that acts as a GTP-hydrolysis-dependent molecular chaperone, activating the urease apoprotein by helping to assemble the nickel containing metallocenter of UreC. The UreE protein probably delivers the nickel.

The protein localises to the cytoplasm. Functionally, required for maturation of urease via the functional incorporation of the urease nickel metallocenter. The protein is Urease accessory protein UreD of Haemophilus influenzae (strain PittEE).